The following is a 931-amino-acid chain: Bifunctional uridylyltransferase/uridylyl-removing enzyme (931 aa).

Positions 1-383 are uridylyltransferase; it reads MDLATTNDAA…RPGTELRRVP (383 aa). Residues 384–739 are uridylyl-removing; that stretch reads EGDDFIIDNN…VGFDEARGVT (356 aa). The HD domain occupies 499–622; it reads VDEHLLRCIG…VQSVEQMKLL (124 aa). ACT domains lie at 740–822 and 851–931; these read ELTI…VVAR and VIEV…QSVG.

The protein belongs to the GlnD family. The cofactor is Mg(2+).

The catalysed reaction is [protein-PII]-L-tyrosine + UTP = [protein-PII]-uridylyl-L-tyrosine + diphosphate. The enzyme catalyses [protein-PII]-uridylyl-L-tyrosine + H2O = [protein-PII]-L-tyrosine + UMP + H(+). Uridylyltransferase (UTase) activity is inhibited by glutamine, while glutamine activates uridylyl-removing (UR) activity. In terms of biological role, modifies, by uridylylation and deuridylylation, the PII regulatory proteins (GlnB and homologs), in response to the nitrogen status of the cell that GlnD senses through the glutamine level. Under low glutamine levels, catalyzes the conversion of the PII proteins and UTP to PII-UMP and PPi, while under higher glutamine levels, GlnD hydrolyzes PII-UMP to PII and UMP (deuridylylation). Thus, controls uridylylation state and activity of the PII proteins, and plays an important role in the regulation of nitrogen assimilation and metabolism. This chain is Bifunctional uridylyltransferase/uridylyl-removing enzyme, found in Nitrobacter hamburgensis (strain DSM 10229 / NCIMB 13809 / X14).